We begin with the raw amino-acid sequence, 350 residues long: MNLRGLFQDFNPSKFLIYACLLLFSVLLALRLDGIIQWSYWAVFAPIWLWKLMVIVGASVGTGVWARNPQYRAEGETCVEFKAMLIAVGIHLLLLMFEVLVCDRIERGSHFWLLVFMPLFFVSPVSVAACVWGFRHDRSLELEILCSVNILQFIFIALRLDKIIHWPWLVVCVPLWILMSFLCLVVLYYIVWSVLFLRSMDVIAEQRRTHITMALSWMTIVVPLLTFEILLVHKLDGHNAFSCIPIFVPLWLSLITLMATTFGQKGGNHWWFGIRKDFCQFLLEIFPFLREYGNISYDLHHEDNEETEETPVPEPPKIAPMFRKKARVVITQSPGKYVLPPPKLNIEMPD.

Helical transmembrane passes span Leu-16–Ile-36, Trp-41–Gly-61, Phe-81–Val-101, Phe-111–Val-131, Ile-177–Leu-197, Ile-211–Leu-231, and Ala-240–Thr-260. The mediates interaction with MAP1B stretch occupies residues Asp-298–Asp-350.

The protein belongs to the TMEM185 family. In terms of assembly, interacts with MAP1B.

It localises to the cell projection. Its subcellular location is the dendrite. It is found in the membrane. This Homo sapiens (Human) protein is Transmembrane protein 185A (TMEM185A).